We begin with the raw amino-acid sequence, 163 residues long: Ankyrin repeat domain-containing protein 37 (163 aa).

ANK repeat units lie at residues Leu29 to Gln58, Phe62 to Met91, and Asp95 to Thr124. The short motif at Gln129–Gln149 is the Nuclear localization signal element.

It is found in the nucleus. The protein resides in the cytoplasm. The sequence is that of Ankyrin repeat domain-containing protein 37 (ankrd37) from Xenopus tropicalis (Western clawed frog).